We begin with the raw amino-acid sequence, 562 residues long: Arginine--tRNA ligase (562 aa).

The short motif at 129–139 is the 'HIGH' region element; that stretch reads ANPTGPLHVGH.

The protein belongs to the class-I aminoacyl-tRNA synthetase family. As to quaternary structure, monomer.

Its subcellular location is the cytoplasm. It catalyses the reaction tRNA(Arg) + L-arginine + ATP = L-arginyl-tRNA(Arg) + AMP + diphosphate. The sequence is that of Arginine--tRNA ligase from Stenotrophomonas maltophilia (strain K279a).